The sequence spans 160 residues: Large ribosomal subunit protein uL16 (160 aa).

The segment at 138-160 (KNLEAPSQEKTKNSKKSQEEVKQ) is disordered.

It belongs to the universal ribosomal protein uL16 family. Part of the 50S ribosomal subunit.

Functionally, binds 23S rRNA and is also seen to make contacts with the A and possibly P site tRNAs. The protein is Large ribosomal subunit protein uL16 of Prochlorococcus marinus (strain MIT 9215).